A 323-amino-acid chain; its full sequence is tRNA U34 carboxymethyltransferase (323 aa).

Carboxy-S-adenosyl-L-methionine-binding positions include lysine 91, tryptophan 105, lysine 110, glycine 130, 152–154, 181–182, methionine 196, tyrosine 200, and arginine 315; these read DPT and IE.

Belongs to the class I-like SAM-binding methyltransferase superfamily. CmoB family. As to quaternary structure, homotetramer.

It carries out the reaction carboxy-S-adenosyl-L-methionine + 5-hydroxyuridine(34) in tRNA = 5-carboxymethoxyuridine(34) in tRNA + S-adenosyl-L-homocysteine + H(+). Functionally, catalyzes carboxymethyl transfer from carboxy-S-adenosyl-L-methionine (Cx-SAM) to 5-hydroxyuridine (ho5U) to form 5-carboxymethoxyuridine (cmo5U) at position 34 in tRNAs. The polypeptide is tRNA U34 carboxymethyltransferase (Shigella dysenteriae serotype 1 (strain Sd197)).